We begin with the raw amino-acid sequence, 552 residues long: Membrane protein insertase YidC (552 aa).

The chain crosses the membrane as a helical span at residues 3-23 (TKRLILFVIFSFSILMLWDSW). The disordered stretch occupies residues 29–65 (PPAASQTQTTAQSVEDGSVPQAAKSSASAANQASVPA). 4 helical membrane-spanning segments follow: residues 359 to 379 (WGVA…PLSA), 429 to 449 (LPIL…LGSV), 463 to 483 (LSAV…MIIQ), and 503 to 523 (PIVF…YWLV).

Belongs to the OXA1/ALB3/YidC family. Type 1 subfamily. As to quaternary structure, interacts with the Sec translocase complex via SecD. Specifically interacts with transmembrane segments of nascent integral membrane proteins during membrane integration.

It is found in the cell inner membrane. In terms of biological role, required for the insertion and/or proper folding and/or complex formation of integral membrane proteins into the membrane. Involved in integration of membrane proteins that insert both dependently and independently of the Sec translocase complex, as well as at least some lipoproteins. Aids folding of multispanning membrane proteins. The protein is Membrane protein insertase YidC of Methylobacillus flagellatus (strain ATCC 51484 / DSM 6875 / VKM B-1610 / KT).